The chain runs to 226 residues: Urease accessory protein UreF (226 aa).

The protein belongs to the UreF family. In terms of assembly, ureD, UreF and UreG form a complex that acts as a GTP-hydrolysis-dependent molecular chaperone, activating the urease apoprotein by helping to assemble the nickel containing metallocenter of UreC. The UreE protein probably delivers the nickel.

It is found in the cytoplasm. Its function is as follows. Required for maturation of urease via the functional incorporation of the urease nickel metallocenter. The protein is Urease accessory protein UreF of Burkholderia multivorans (strain ATCC 17616 / 249).